Here is a 644-residue protein sequence, read N- to C-terminus: SPbeta prophage-derived uncharacterized protein YomE (644 aa).

In Bacillus subtilis (strain 168), this protein is SPbeta prophage-derived uncharacterized protein YomE (yomE).